The primary structure comprises 308 residues: Olfactory receptor 6F1 (308 aa).

The Extracellular portion of the chain corresponds to 1–25 (MDTGNKTLPQDFLLLGFPGSQTLQL). N-linked (GlcNAc...) asparagine glycosylation occurs at Asn-5. The helical transmembrane segment at 26-46 (SLFMLFLVMYILTVSGNVAIL) threads the bilayer. Residues 47–54 (MLVSTSHQ) lie on the Cytoplasmic side of the membrane. A helical membrane pass occupies residues 55–75 (LHTPMYFFLSNLSFLEIWYTT). The Extracellular portion of the chain corresponds to 76 to 99 (AAVPKALAILLGRSQTISFTSCLL). The cysteines at positions 97 and 189 are disulfide-linked. The helical transmembrane segment at 100-120 (QMYFVFSLGCTEYFLLAAMAY) threads the bilayer. Residues 121–139 (DRCLAICYPLHYGAIMSSL) are Cytoplasmic-facing. A helical membrane pass occupies residues 140 to 160 (LSAQLALGSWVCGFVAIAVPT). Over 161–197 (ALISGLSFCGPRAINHFFCDIAPWIALACTNTQAVEL) the chain is Extracellular. A helical transmembrane segment spans residues 198–217 (VAFVIAVVVILSSCLITFVS). Over 218–237 (YVYIISTILRIPSASGRSKA) the chain is Cytoplasmic. The chain crosses the membrane as a helical span at residues 238–258 (FSTCSSHLTVVLIWYGSTVFL). At 259-271 (HVRTSIKDALDLI) the chain is on the extracellular side. The chain crosses the membrane as a helical span at residues 272-292 (KAVHVLNTVVTPVLNPFIYTL). The Cytoplasmic segment spans residues 293 to 308 (RNKEVRETLLKKWKGK).

This sequence belongs to the G-protein coupled receptor 1 family.

It localises to the cell membrane. Its function is as follows. Odorant receptor. In Homo sapiens (Human), this protein is Olfactory receptor 6F1 (OR6F1).